A 313-amino-acid polypeptide reads, in one-letter code: MIFATLEHILTHISFSIISIVITTHLMTFAREIAGLSDLSEKGMIAVFLRITGLLVTRWIYSGHLPLSNLYESLIFLSWGFSLIHMISKIQNHKNFLSSITAPSAILTQGFVTSGLLTEMHQSAILVPALQSHWLIMHVSMMLLSYAALLCGSLLSIALLVITFRKKLDIIFLLIRLFSFGEIQYLNEKRSILQNTSFSFRNYHKYQLTQQLDHWSYRVIGIGFTLLTLGILSGAVWANEAWGSYWNWDPKETWAFITWTISAIYLHTRTNKNLQSANSAIVASIGFLIIWICYFGVNLLGIGLHSYGSFALR.

Helical transmembrane passes span 13–35 (ISFS…EIAG), 43–63 (GMIA…IYSG), 67–87 (LSNL…IHMI), 96–116 (FLSS…TSGL), 142–162 (MLLS…LLVI), 219–239 (VIGI…VWAN), 252–269 (ETWA…LHTR), and 280–300 (AIVA…VNLL).

Belongs to the CcmF/CycK/Ccl1/NrfE/CcsA family. In terms of assembly, may interact with Ccs1.

The protein localises to the plastid. Its subcellular location is the chloroplast thylakoid membrane. Functionally, required during biogenesis of c-type cytochromes (cytochrome c6 and cytochrome f) at the step of heme attachment. This chain is Cytochrome c biogenesis protein CcsA, found in Amborella trichopoda.